A 183-amino-acid polypeptide reads, in one-letter code: Bifunctional protein PyrR (183 aa).

The short motif at 102–114 is the PRPP-binding element; it reads VVLVDDVLFSGRT.

It belongs to the purine/pyrimidine phosphoribosyltransferase family. PyrR subfamily.

It carries out the reaction UMP + diphosphate = 5-phospho-alpha-D-ribose 1-diphosphate + uracil. Functionally, regulates the transcription of the pyrimidine nucleotide (pyr) operon in response to exogenous pyrimidines. Also displays a weak uracil phosphoribosyltransferase activity which is not physiologically significant. This chain is Bifunctional protein PyrR, found in Leifsonia xyli subsp. xyli (strain CTCB07).